Reading from the N-terminus, the 368-residue chain is Protein RecA (368 aa).

Position 80–87 (80–87 (GPESSGKT)) interacts with ATP. Polar residues predominate over residues 344-353 (NPTFTATPDS). Residues 344-368 (NPTFTATPDSENADNADDEFSEEEL) are disordered. Residues 354-368 (ENADNADDEFSEEEL) are compositionally biased toward acidic residues.

It belongs to the RecA family.

It is found in the cytoplasm. Can catalyze the hydrolysis of ATP in the presence of single-stranded DNA, the ATP-dependent uptake of single-stranded DNA by duplex DNA, and the ATP-dependent hybridization of homologous single-stranded DNAs. It interacts with LexA causing its activation and leading to its autocatalytic cleavage. The sequence is that of Protein RecA from Mannheimia haemolytica (Pasteurella haemolytica).